The sequence spans 732 residues: Coagulation factor XIII A chain (732 aa).

A disordered region spans residues 1-26; that stretch reads MSDTPASTFGGRRAVPPNNSNAAEVD. Ser-2 carries the post-translational modification N-acetylserine. Residues 2–38 constitute a propeptide, activation peptide; sequence SDTPASTFGGRRAVPPNNSNAAEVDLPTEELQGLVPR. Catalysis depends on residues Cys-315, His-374, and Asp-397. Ca(2+)-binding residues include Asn-437, Asp-439, Glu-486, and Glu-491. Asn-614 carries N-linked (GlcNAc...) asparagine glycosylation.

This sequence belongs to the transglutaminase superfamily. Transglutaminase family. As to quaternary structure, tetramer of two A chains (F13A1) and two B (F13B) chains. It depends on Ca(2+) as a cofactor. Post-translationally, the activation peptide is released by thrombin.

The protein localises to the cytoplasm. It is found in the secreted. The catalysed reaction is L-glutaminyl-[protein] + L-lysyl-[protein] = [protein]-L-lysyl-N(6)-5-L-glutamyl-[protein] + NH4(+). Its function is as follows. Factor XIII is activated by thrombin and calcium ion to a transglutaminase that catalyzes the formation of gamma-glutamyl-epsilon-lysine cross-links between fibrin chains, thus stabilizing the fibrin clot. Also cross-link alpha-2-plasmin inhibitor, or fibronectin, to the alpha chains of fibrin. This chain is Coagulation factor XIII A chain (F13a1), found in Mus musculus (Mouse).